The sequence spans 314 residues: 4-hydroxy-3-methylbut-2-enyl diphosphate reductase (314 aa).

Cysteine 12 contacts [4Fe-4S] cluster. Residues histidine 41 and histidine 74 each coordinate (2E)-4-hydroxy-3-methylbut-2-enyl diphosphate. Residues histidine 41 and histidine 74 each coordinate dimethylallyl diphosphate. Residues histidine 41 and histidine 74 each coordinate isopentenyl diphosphate. Residue cysteine 96 coordinates [4Fe-4S] cluster. Histidine 124 contributes to the (2E)-4-hydroxy-3-methylbut-2-enyl diphosphate binding site. Residue histidine 124 coordinates dimethylallyl diphosphate. An isopentenyl diphosphate-binding site is contributed by histidine 124. Glutamate 126 serves as the catalytic Proton donor. Residue threonine 167 participates in (2E)-4-hydroxy-3-methylbut-2-enyl diphosphate binding. Cysteine 197 contacts [4Fe-4S] cluster. The (2E)-4-hydroxy-3-methylbut-2-enyl diphosphate site is built by serine 225, serine 226, asparagine 227, and serine 269. Dimethylallyl diphosphate contacts are provided by serine 225, serine 226, asparagine 227, and serine 269. Isopentenyl diphosphate contacts are provided by serine 225, serine 226, asparagine 227, and serine 269.

Belongs to the IspH family. [4Fe-4S] cluster serves as cofactor.

The catalysed reaction is isopentenyl diphosphate + 2 oxidized [2Fe-2S]-[ferredoxin] + H2O = (2E)-4-hydroxy-3-methylbut-2-enyl diphosphate + 2 reduced [2Fe-2S]-[ferredoxin] + 2 H(+). It catalyses the reaction dimethylallyl diphosphate + 2 oxidized [2Fe-2S]-[ferredoxin] + H2O = (2E)-4-hydroxy-3-methylbut-2-enyl diphosphate + 2 reduced [2Fe-2S]-[ferredoxin] + 2 H(+). It participates in isoprenoid biosynthesis; dimethylallyl diphosphate biosynthesis; dimethylallyl diphosphate from (2E)-4-hydroxy-3-methylbutenyl diphosphate: step 1/1. It functions in the pathway isoprenoid biosynthesis; isopentenyl diphosphate biosynthesis via DXP pathway; isopentenyl diphosphate from 1-deoxy-D-xylulose 5-phosphate: step 6/6. Its function is as follows. Catalyzes the conversion of 1-hydroxy-2-methyl-2-(E)-butenyl 4-diphosphate (HMBPP) into a mixture of isopentenyl diphosphate (IPP) and dimethylallyl diphosphate (DMAPP). Acts in the terminal step of the DOXP/MEP pathway for isoprenoid precursor biosynthesis. The protein is 4-hydroxy-3-methylbut-2-enyl diphosphate reductase of Glaesserella parasuis serovar 5 (strain SH0165) (Haemophilus parasuis).